Reading from the N-terminus, the 158-residue chain is MAEDLEISKGSKEEQYENLLPQIEGLLTGENNQIANLANVTAALKEQFNFFWVGFYLVDTENELVLAPFQGPIACTRIRKGRGVCGTAWQQEKTLIVPDVEKFPGHIACSSLSKSEIVLPLYKQGNIIGVLDVDSDKLNSFDEIDEKYLTQILKLLDN.

The GAF domain maps to N32–N158.

This sequence belongs to the free Met sulfoxide reductase family.

The polypeptide is GAF domain-containing protein A (gafA) (Dictyostelium discoideum (Social amoeba)).